The chain runs to 79 residues: D-alanyl carrier protein (79 aa).

The 77-residue stretch at 1–77 folds into the Carrier domain; the sequence is MDTKQAVLDI…KIIAKVESLR (77 aa). Ser35 is subject to O-(pantetheine 4'-phosphoryl)serine.

Belongs to the DltC family. 4'-phosphopantetheine is transferred from CoA to a specific serine of apo-DCP.

Its subcellular location is the cytoplasm. It participates in cell wall biogenesis; lipoteichoic acid biosynthesis. In terms of biological role, carrier protein involved in the D-alanylation of lipoteichoic acid (LTA). The loading of thioester-linked D-alanine onto DltC is catalyzed by D-alanine--D-alanyl carrier protein ligase DltA. The DltC-carried D-alanyl group is further transferred to cell membrane phosphatidylglycerol (PG) by forming an ester bond, probably catalyzed by DltD. D-alanylation of LTA plays an important role in modulating the properties of the cell wall in Gram-positive bacteria, influencing the net charge of the cell wall. This Lactobacillus johnsonii (strain CNCM I-12250 / La1 / NCC 533) protein is D-alanyl carrier protein.